The primary structure comprises 107 residues: MNTAIIYVGAAIAEIAGCFAFWGWLRLGKPVWWLAPGLLSLALFAYLLTLVESEAAGRAYAAYGGIYIVASLAWLWSVEGVRPDRWDVSGACVCLAGAAIILWGPRG.

The next 4 helical transmembrane spans lie at 5–25 (IIYV…WGWL), 31–51 (VWWL…LTLV), 61–81 (AAYG…VEGV), and 85–105 (RWDV…LWGP).

It belongs to the UPF0060 family.

Its subcellular location is the cell inner membrane. The protein is UPF0060 membrane protein RPB_2370 of Rhodopseudomonas palustris (strain HaA2).